The sequence spans 879 residues: Band 4.1-like protein 1 (879 aa).

Residues 1–88 (MTTETGPDSE…TPSKAQKSPQ (88 aa)) are disordered. The span at 17-35 (ETPQQPEAAAAVTTPVTPA) shows a compositional bias: low complexity. At T30 the chain carries Phosphothreonine. Over residues 38 to 50 (SHPETNSNEKHLT) the composition is skewed to basic and acidic residues. Position 75 is a phosphoserine (S75). Positions 76–87 (ERTTPSKAQKSP) are enriched in polar residues. T79 is subject to Phosphothreonine. In terms of domain architecture, FERM spans 97-378 (AICRVTLLDA…EHHTFFRLVS (282 aa)). The residue at position 343 (Y343) is a Phosphotyrosine. 5 positions are modified to phosphoserine: S378, S430, S437, S461, and S466. The segment at 381-482 (PPPKGFLVMG…VRTPTKIKEL (102 aa)) is hydrophilic. Residues 428 to 501 (SRSLDGAEFS…HKQEFLDKPE (74 aa)) are disordered. Residues 444-501 (ENHDAGPEGDKREDDAESGGRRSEAEEGEVRTPTKIKELKPEQETTPRHKQEFLDKPE) show a composition bias toward basic and acidic residues. Position 475 is a phosphothreonine (T475). Positions 483 to 541 (KPEQETTPRHKQEFLDKPEDVLLKHQASINELKRTLKEPNSKLIHRDRDWDRERRLPSS) are spectrin--actin-binding. Position 510 is a phosphoserine (S510). Over residues 514–538 (LKRTLKEPNSKLIHRDRDWDRERRL) the composition is skewed to basic and acidic residues. The disordered stretch occupies residues 514–594 (LKRTLKEPNS…QDQERDAVFL (81 aa)). 4 positions are modified to phosphoserine: S540, S541, S544, and S546. Phosphothreonine is present on T550. Basic and acidic residues predominate over residues 550 to 577 (TPEKASERAGLREGSEEKVKPPRPRAPE). Phosphoserine occurs at positions 564, 578, 639, 648, 650, 665, 666, 671, 677, and 684. The interval 657 to 696 (FAQDLKGPSSQEDESGGLEDSPDRGACSTPEMPQFESVKA) is disordered. The residue at position 685 (T685) is a Phosphothreonine. Phosphoserine occurs at positions 721, 782, and 868. Residues 743 to 879 (PCITTETIST…EERDKKPQES (137 aa)) form a C-terminal (CTD) region.

Interacts with AGAP2. In terms of tissue distribution, highest expression in brain, also present in kidney, olfactory epithelium, retina, sensory ganglia, gastrointestinal tract (only enteric neurons) and lung.

The protein localises to the cytoplasm. It localises to the cytoskeleton. Its function is as follows. May function to confer stability and plasticity to neuronal membrane via multiple interactions, including the spectrin-actin-based cytoskeleton, integral membrane channels and membrane-associated guanylate kinases. This is Band 4.1-like protein 1 from Mus musculus (Mouse).